We begin with the raw amino-acid sequence, 117 residues long: Non-specific lipid-transfer protein 2 (117 aa).

The first 25 residues, 1 to 25 (MAGLMKLACLVLACMIVAGPITSNA), serve as a signal peptide directing secretion. 4 disulfide bridges follow: Cys29–Cys76, Cys39–Cys53, Cys54–Cys99, and Cys74–Cys113.

The protein belongs to the plant LTP family.

Functionally, plant non-specific lipid-transfer proteins transfer phospholipids as well as galactolipids across membranes. May play a role in wax or cutin deposition in the cell walls of expanding epidermal cells and certain secretory tissues. The polypeptide is Non-specific lipid-transfer protein 2 (LTP2) (Brassica napus (Rape)).